A 136-amino-acid chain; its full sequence is Probable flagellum biosynthesis repressor protein FlbT 2 (136 aa).

The protein belongs to the FlbT family.

In terms of biological role, has a post-transcriptional repressor function in flagellum biogenesis. Associates with the 5'-UTR of fljK mRNA and promotes its degradation. This is Probable flagellum biosynthesis repressor protein FlbT 2 from Bradyrhizobium diazoefficiens (strain JCM 10833 / BCRC 13528 / IAM 13628 / NBRC 14792 / USDA 110).